The sequence spans 274 residues: MHQLKKLITVKVIGSGEKTVVLGHGFGTDQSVWKHLVPYLVEDYRVVLYDNMGAGPTNPDYFDFERYASLEGYAYDLLAILEELQIDSCIYLGHSLSSMTGVIASIFRPDLFSKLIMLSASPRFINADDYYGGFEKEDIDQLSQAMDTNYKSWIEGFAPLVIGGDMDSVAVQEFSRTLFNMRPDIALSVFRTIFTFDLRHFLCRVTVPCHIIQSSKDLAVPVAVSEYIHQNLGGKSIVEVISTEGHLPQLSAPEVTIPVLLRHISHDITSNAAP.

Ser-95 (nucleophile) is an active-site residue. Residues Asp-217 and His-246 contribute to the active site.

Belongs to the AB hydrolase superfamily. As to quaternary structure, interacts with MAX2A and MAX2B in the presence of (-)-germacrene D, thus forming an E3 SCF ubiquitin ligase complex (ASK-cullin-F-box) containing MAX2A or MAX2B and KAI2IA recognizing SMAX1A; this leads to the subsequent degradation of the transcriptional corepressor SMAX1A, thus triggering the activation of a downstream signaling cascade. In terms of tissue distribution, strongly expressed in stigma.

The protein resides in the nucleus. It localises to the cytoplasm. Its activity is regulated as follows. Hydrolysis activity toward yoshimulactone green (YLG), a fluorescent agonist to strigolactone receptor, is inhibited by (-)-germacrene D and GR24, a synthetic strigolactone analog. Hydrolase involved in the olfaction of sesquiterpene volatile organic compounds (VOCs) during volatile plant communication in a MAX2 proteins-dependent manner. Acts as a karrikin-insensitive receptor that stereospecifically perceives and binds to (-)-germacrene D, particularly in stigmas, and triggers a signaling cascade influencing plant fitness, as the result of reproductive organ growth-promoting effect; this process involves an interaction with MAX2 proteins (e.g. MAX2A and MAX2B) and the subsequent degradation of SMAX1a, a transcriptional corepressor. This Petunia hybrida (Petunia) protein is Karrikin insensitive 2 receptor IA.